Consider the following 170-residue polypeptide: UPF0316 protein CLJ_B0679 (170 aa).

Helical transmembrane passes span 1–21 and 36–56; these read MLSY…LMTI and IIGF…LSGI.

Belongs to the UPF0316 family.

Its subcellular location is the cell membrane. The polypeptide is UPF0316 protein CLJ_B0679 (Clostridium botulinum (strain 657 / Type Ba4)).